A 201-amino-acid polypeptide reads, in one-letter code: Holliday junction resolvase RecU (201 aa).

Residues Thr-87, Asp-89, Glu-102, and Gln-121 each contribute to the Mg(2+) site.

Belongs to the RecU family. The cofactor is Mg(2+).

The protein localises to the cytoplasm. The catalysed reaction is Endonucleolytic cleavage at a junction such as a reciprocal single-stranded crossover between two homologous DNA duplexes (Holliday junction).. Functionally, endonuclease that resolves Holliday junction intermediates in genetic recombination. Cleaves mobile four-strand junctions by introducing symmetrical nicks in paired strands. Promotes annealing of linear ssDNA with homologous dsDNA. Required for DNA repair, homologous recombination and chromosome segregation. This is Holliday junction resolvase RecU from Listeria welshimeri serovar 6b (strain ATCC 35897 / DSM 20650 / CCUG 15529 / CIP 8149 / NCTC 11857 / SLCC 5334 / V8).